Here is a 325-residue protein sequence, read N- to C-terminus: Probable NADH kinase (325 aa).

The protein belongs to the NAD kinase family. As to quaternary structure, homodimer.

Its subcellular location is the cytoplasm. The enzyme catalyses NADH + ATP = ADP + NADPH + H(+). Functionally, key source of the cellular reductant NADPH which is an important antioxidant factor. This chain is Probable NADH kinase, found in Oryza sativa subsp. japonica (Rice).